Reading from the N-terminus, the 783-residue chain is Protein phosphatase 2C 29 (783 aa).

The disordered stretch occupies residues 151–194 (SFSALPLQPGPDRSGLFMSGPIERGATSGPLDPPAGEISRSNSA). S199 carries the post-translational modification Phosphoserine. Residues 260-770 (SSGENDLQWA…DDCTVLVIAL (511 aa)) enclose the PPM-type phosphatase domain. Mn(2+)-binding residues include D295 and G296. The segment at 555 to 595 (ETGESVETAERVEERRNDLDRDDGNKEPLVVDSSDSTVNNE) is disordered. The segment covering 562 to 580 (TAERVEERRNDLDRDDGNK) has biased composition (basic and acidic residues). Mn(2+) is bound by residues D701 and D761.

This sequence belongs to the PP2C family. Mg(2+) is required as a cofactor. Requires Mn(2+) as cofactor. Expressed in roots, leaves, stems, inflorescences, flowers and developing vascular tissue.

It is found in the nucleus. The catalysed reaction is O-phospho-L-seryl-[protein] + H2O = L-seryl-[protein] + phosphate. It catalyses the reaction O-phospho-L-threonyl-[protein] + H2O = L-threonyl-[protein] + phosphate. In terms of biological role, involved in the regulation of pedicel length and of CLAVATA pathways controlling stem cell identity at shoot and flower meristems. This chain is Protein phosphatase 2C 29 (PLL1), found in Arabidopsis thaliana (Mouse-ear cress).